Here is a 299-residue protein sequence, read N- to C-terminus: 4-hydroxybenzoate octaprenyltransferase (299 aa).

8 helical membrane passes run 33 to 53 (VGFLLLLWPTWWALWLAADGV), 56 to 76 (WWTLCVFTTGIWLTRSAGCVI), 107 to 127 (LLMFATLMLIAFGLVLTMNQL), 151 to 171 (LPQVYLGLAFGWGIPMAFAAI), 180 to 200 (WLLYIANILWTTAYDTWYAMV), 213 to 233 (IAILFAELDLVVQGVLYTLML), 247 to 267 (HTYWISLISAVALIGYQFIIA), and 278 to 298 (AFMHNNWVGMTIFAGIALATT).

The protein belongs to the UbiA prenyltransferase family. Mg(2+) serves as cofactor.

Its subcellular location is the cell inner membrane. The catalysed reaction is all-trans-octaprenyl diphosphate + 4-hydroxybenzoate = 4-hydroxy-3-(all-trans-octaprenyl)benzoate + diphosphate. The protein operates within cofactor biosynthesis; ubiquinone biosynthesis. In terms of biological role, catalyzes the prenylation of para-hydroxybenzoate (PHB) with an all-trans polyprenyl group. Mediates the second step in the final reaction sequence of ubiquinone-8 (UQ-8) biosynthesis, which is the condensation of the polyisoprenoid side chain with PHB, generating the first membrane-bound Q intermediate 3-octaprenyl-4-hydroxybenzoate. This chain is 4-hydroxybenzoate octaprenyltransferase, found in Xylella fastidiosa (strain M12).